The sequence spans 414 residues: ORC1-type DNA replication protein 1 (414 aa).

ATP is bound by residues 70–74 (TGKTA), tyrosine 213, and arginine 225.

Belongs to the CDC6/cdc18 family.

In terms of biological role, involved in regulation of DNA replication. This Methanosarcina acetivorans (strain ATCC 35395 / DSM 2834 / JCM 12185 / C2A) protein is ORC1-type DNA replication protein 1 (cdc6-1).